The chain runs to 144 residues: Large ribosomal subunit protein uL15 (144 aa).

A disordered region spans residues 1–59; sequence MELNNLKPAEGAKHAKRRVGRGIGSGLGKTAGRGHKGQKSRSGGFHKVGFEGGQMPLQR. The segment covering 21-31 has biased composition (gly residues); sequence RGIGSGLGKTA.

This sequence belongs to the universal ribosomal protein uL15 family. Part of the 50S ribosomal subunit.

In terms of biological role, binds to the 23S rRNA. The protein is Large ribosomal subunit protein uL15 of Burkholderia thailandensis (strain ATCC 700388 / DSM 13276 / CCUG 48851 / CIP 106301 / E264).